Consider the following 113-residue polypeptide: Nucleoid-associated protein CLJ_B0037 (113 aa).

The segment covering 93–102 has biased composition (basic and acidic residues); that stretch reads EEDTSSEVKR. Positions 93-113 are disordered; sequence EEDTSSEVKRLTGGMNLPGMF.

The protein belongs to the YbaB/EbfC family. In terms of assembly, homodimer.

It is found in the cytoplasm. Its subcellular location is the nucleoid. Functionally, binds to DNA and alters its conformation. May be involved in regulation of gene expression, nucleoid organization and DNA protection. This chain is Nucleoid-associated protein CLJ_B0037, found in Clostridium botulinum (strain 657 / Type Ba4).